Consider the following 307-residue polypeptide: 4-hydroxy-tetrahydrodipicolinate synthase (307 aa).

Thr49 serves as a coordination point for pyruvate. Tyr138 serves as the catalytic Proton donor/acceptor. The Schiff-base intermediate with substrate role is filled by Lys166. Pyruvate is bound at residue Ile207.

Belongs to the DapA family. Homotetramer; dimer of dimers.

It is found in the cytoplasm. The enzyme catalyses L-aspartate 4-semialdehyde + pyruvate = (2S,4S)-4-hydroxy-2,3,4,5-tetrahydrodipicolinate + H2O + H(+). It participates in amino-acid biosynthesis; L-lysine biosynthesis via DAP pathway; (S)-tetrahydrodipicolinate from L-aspartate: step 3/4. In terms of biological role, catalyzes the condensation of (S)-aspartate-beta-semialdehyde [(S)-ASA] and pyruvate to 4-hydroxy-tetrahydrodipicolinate (HTPA). In Limosilactobacillus reuteri (strain DSM 20016) (Lactobacillus reuteri), this protein is 4-hydroxy-tetrahydrodipicolinate synthase.